The chain runs to 73 residues: Translation initiation factor IF-1 (73 aa).

Positions 1–73 (MSEKEAGIEV…TRGRITYRDK (73 aa)) constitute an S1-like domain.

This sequence belongs to the IF-1 family. In terms of assembly, component of the 30S ribosomal translation pre-initiation complex which assembles on the 30S ribosome in the order IF-2 and IF-3, IF-1 and N-formylmethionyl-tRNA(fMet); mRNA recruitment can occur at any time during PIC assembly.

The protein resides in the cytoplasm. One of the essential components for the initiation of protein synthesis. Stabilizes the binding of IF-2 and IF-3 on the 30S subunit to which N-formylmethionyl-tRNA(fMet) subsequently binds. Helps modulate mRNA selection, yielding the 30S pre-initiation complex (PIC). Upon addition of the 50S ribosomal subunit IF-1, IF-2 and IF-3 are released leaving the mature 70S translation initiation complex. This Anaeromyxobacter sp. (strain Fw109-5) protein is Translation initiation factor IF-1.